The sequence spans 228 residues: Ribonuclease 3 (228 aa).

The 129-residue stretch at 2–130 folds into the RNase III domain; it reads LTYLEQKINY…LLAAVYLDGG (129 aa). E43 contacts Mg(2+). D47 is a catalytic residue. The Mg(2+) site is built by D116 and E119. E119 is an active-site residue. The DRBM domain maps to 157–226; it reads DYKTRLQEVV…AMEALSKLGI (70 aa).

The protein belongs to the ribonuclease III family. Homodimer. Requires Mg(2+) as cofactor.

Its subcellular location is the cytoplasm. The catalysed reaction is Endonucleolytic cleavage to 5'-phosphomonoester.. Digests double-stranded RNA. Involved in the processing of primary rRNA transcript to yield the immediate precursors to the large and small rRNAs (23S and 16S). Processes some mRNAs, and tRNAs when they are encoded in the rRNA operon. Processes pre-crRNA and tracrRNA of type II CRISPR loci if present in the organism. This chain is Ribonuclease 3, found in Caldanaerobacter subterraneus subsp. tengcongensis (strain DSM 15242 / JCM 11007 / NBRC 100824 / MB4) (Thermoanaerobacter tengcongensis).